We begin with the raw amino-acid sequence, 114 residues long: uncharacterized protein (114 aa).

C10 is an active-site residue.

The protein belongs to the ArsC family.

This is an uncharacterized protein from Haemophilus influenzae (strain ATCC 51907 / DSM 11121 / KW20 / Rd).